The primary structure comprises 295 residues: G1/S-specific cyclin-D1 (295 aa).

Residues 28 to 152 (LRAMLKTEET…LLVNKLKWNL (125 aa)) form the Cyclin N-terminal domain. The segment at 262-283 (AQQNVDPKATEEEGEVEEEAGL) is disordered. Residue lysine 269 forms a Glycyl lysine isopeptide (Lys-Gly) (interchain with G-Cter in ubiquitin) linkage. Threonine 286 is modified (phosphothreonine).

The protein belongs to the cyclin family. Cyclin D subfamily. As to quaternary structure, interacts with either CDK4 or CDK6 protein kinase to form a serine/threonine kinase holoenzyme complex. The cyclin subunit imparts substrate specificity to the complex. Component of the ternary complex CCND1/CDK4/CDKN1B required for nuclear translocation and modulation of CDK4-mediated kinase activity. Interacts directly with CDKN1B. Can form similar complexes with either CDKN1A or CDKN2A. Interacts with UHRF2; the interaction ubiquitinates CCND1 and appears to occur independently of phosphorylation. Interacts with USP2. Interacts (via cyclin N-terminal domain) with INSM1 (via N-terminal region); the interaction competes with the binding of CCND1 to CDK4 during cell cycle progression and inhibits CDK4 activity. Interacts with CDK4; the interaction is prevented with the binding of CCND1 to INSM1 during cell cycle progression. In terms of processing, phosphorylation at Thr-286 by MAP kinases is required for ubiquitination and degradation by the DCX(AMBRA1) complex. It also plays an essential role for recognition by the FBXO31 component of SCF (SKP1-cullin-F-box) protein ligase complex following DNA damage. Post-translationally, ubiquitinated at Lys-269 by the DCX(AMBRA1) complex during the transition from G1 to S cell phase, leading to its degradation: ubiquitination is dependent on Thr-286 phosphorylation. The DCX(AMBRA1) complex represents the major regulator of CCND1 stability during the G1/S transition. Also ubiquitinated by the SCF(FBXO4) and Cul7-RING(FBXW8) ubiquitin-protein ligase complexes. Following DNA damage it is ubiquitinated by the SCF(FBXO31) protein ligase complex. SCF(FBXO31) ubiquitination is dependent on Thr-286 phosphorylation. Ubiquitinated also by UHRF2 apparently in a phosphorylation-independent manner. Ubiquitination leads to its degradation and G1 arrest. Deubiquitinated by USP2; leading to its stabilization. Expressed in the intestinal epithelium.

It localises to the nucleus. Its subcellular location is the cytoplasm. The protein localises to the nucleus membrane. Functionally, regulatory component of the cyclin D1-CDK4 (DC) complex that phosphorylates and inhibits members of the retinoblastoma (RB) protein family including RB1 and regulates the cell-cycle during G(1)/S transition. Phosphorylation of RB1 allows dissociation of the transcription factor E2F from the RB/E2F complex and the subsequent transcription of E2F target genes which are responsible for the progression through the G(1) phase. Hypophosphorylates RB1 in early G(1) phase. Cyclin D-CDK4 complexes are major integrators of various mitogenenic and antimitogenic signals. Also a substrate for SMAD3, phosphorylating SMAD3 in a cell-cycle-dependent manner and repressing its transcriptional activity. Component of the ternary complex, cyclin D1/CDK4/CDKN1B, required for nuclear translocation and activity of the cyclin D-CDK4 complex. Exhibits transcriptional corepressor activity with INSM1 on the NEUROD1 and INS promoters in a cell cycle-independent manner. In Mus musculus (Mouse), this protein is G1/S-specific cyclin-D1 (Ccnd1).